A 500-amino-acid chain; its full sequence is Cytochrome P450 71B38 (500 aa).

Residues Ile-3–Pro-23 form a helical membrane-spanning segment. Cys-441 provides a ligand contact to heme.

This sequence belongs to the cytochrome P450 family. The cofactor is heme.

The protein localises to the membrane. This is Cytochrome P450 71B38 (CYP71B38) from Arabidopsis thaliana (Mouse-ear cress).